The following is a 412-amino-acid chain: Multifunctional CCA protein (412 aa).

The ATP site is built by Gly8 and Arg11. 2 residues coordinate CTP: Gly8 and Arg11. Residues Asp21 and Asp23 each contribute to the Mg(2+) site. 3 residues coordinate ATP: Arg91, Arg137, and Arg140. Residues Arg91, Arg137, and Arg140 each coordinate CTP. Positions 226–327 (TGIHTMMVID…VTLFEKTDAL (102 aa)) constitute an HD domain.

The protein belongs to the tRNA nucleotidyltransferase/poly(A) polymerase family. Bacterial CCA-adding enzyme type 1 subfamily. As to quaternary structure, monomer. Can also form homodimers and oligomers. It depends on Mg(2+) as a cofactor. Ni(2+) is required as a cofactor.

The enzyme catalyses a tRNA precursor + 2 CTP + ATP = a tRNA with a 3' CCA end + 3 diphosphate. It catalyses the reaction a tRNA with a 3' CCA end + 2 CTP + ATP = a tRNA with a 3' CCACCA end + 3 diphosphate. Its function is as follows. Catalyzes the addition and repair of the essential 3'-terminal CCA sequence in tRNAs without using a nucleic acid template. Adds these three nucleotides in the order of C, C, and A to the tRNA nucleotide-73, using CTP and ATP as substrates and producing inorganic pyrophosphate. tRNA 3'-terminal CCA addition is required both for tRNA processing and repair. Also involved in tRNA surveillance by mediating tandem CCA addition to generate a CCACCA at the 3' terminus of unstable tRNAs. While stable tRNAs receive only 3'-terminal CCA, unstable tRNAs are marked with CCACCA and rapidly degraded. This is Multifunctional CCA protein from Dechloromonas aromatica (strain RCB).